The chain runs to 424 residues: Hemagglutinin-esterase (424 aa).

2 signal peptides span residues 1 to 16 and 1 to 18; these read MFLL…IIGS and MFLL…GSLG. The interval 7–127 is esterase domain 1; that stretch reads FVLVSCIIGS…SNDIWMQNKG (121 aa). The Virion surface segment spans residues 17–392; sequence LGFDNPPTNV…PICVYDPLPL (376 aa). The active-site Nucleophile is the Ser40. Residues Cys44 and Cys65 are joined by a disulfide bond. Residues Asn54, Asn89, Asn153, Asn236, and Asn301 are each glycosylated (N-linked (GlcNAc...) asparagine; by host). 3 disulfide bridges follow: Cys113-Cys162, Cys197-Cys276, and Cys205-Cys249. The interval 128–266 is receptor binding; that stretch reads LFYTQVYKNM…GNYLAISNEL (139 aa). The interval 267–379 is esterase domain 2; it reads LLTVPTKAIC…RCPTAADINT (113 aa). Cys307 and Cys312 form a disulfide bridge. Residue Asn316 is glycosylated (N-linked (GlcNAc...) asparagine; by host). Catalysis depends on charge relay system residues Asp326 and His329. Cys347 and Cys371 are disulfide-bonded. A glycan (N-linked (GlcNAc...) asparagine; by host) is linked at Asn358. Residues 393 to 413 traverse the membrane as a helical segment; sequence ILLGILLGVAVIIIVVLLLYF. At 414 to 424 the chain is on the intravirion side; it reads MVDNGTRLHDA. Asn417 is a glycosylation site (N-linked (GlcNAc...) asparagine; by host).

This sequence belongs to the influenza type C/coronaviruses hemagglutinin-esterase family. Homodimer; disulfide-linked. Forms a complex with the M protein in the pre-Golgi. Associates then with S-M complex to form a ternary complex S-M-HE. Post-translationally, N-glycosylated in the host RER.

Its subcellular location is the virion membrane. It localises to the host cell membrane. The enzyme catalyses N-acetyl-9-O-acetylneuraminate + H2O = N-acetylneuraminate + acetate + H(+). The catalysed reaction is N-acetyl-4-O-acetylneuraminate + H2O = N-acetylneuraminate + acetate + H(+). Its function is as follows. Structural protein that makes short spikes at the surface of the virus. Contains receptor binding and receptor-destroying activities. Mediates de-O-acetylation of N-acetyl-4-O-acetylneuraminic acid, which is probably the receptor determinant recognized by the virus on the surface of erythrocytes and susceptible cells. This receptor-destroying activity is important for virus release as it probably helps preventing self-aggregation and ensures the efficient spread of the progeny virus from cell to cell. May serve as a secondary viral attachment protein for initiating infection, the spike protein being the major one. May become a target for both the humoral and the cellular branches of the immune system. This chain is Hemagglutinin-esterase, found in Bos taurus (Bovine).